Consider the following 763-residue polypeptide: uncharacterized protein (763 aa).

Residues 380-607 form the TR mART core domain; sequence DSVLNPFNTN…YNIKVITMRL (228 aa). Residues 684–700 traverse the membrane as a helical segment; it reads SYVSIYALLCPLLTNIY.

The protein resides in the membrane. This is an uncharacterized protein from Acanthamoeba polyphaga mimivirus (APMV).